The sequence spans 486 residues: Glutamyl-tRNA(Gln) amidotransferase subunit A (486 aa).

Active-site charge relay system residues include K76 and S151. S175 (acyl-ester intermediate) is an active-site residue.

It belongs to the amidase family. GatA subfamily. Heterotrimer of A, B and C subunits.

It catalyses the reaction L-glutamyl-tRNA(Gln) + L-glutamine + ATP + H2O = L-glutaminyl-tRNA(Gln) + L-glutamate + ADP + phosphate + H(+). Allows the formation of correctly charged Gln-tRNA(Gln) through the transamidation of misacylated Glu-tRNA(Gln) in organisms which lack glutaminyl-tRNA synthetase. The reaction takes place in the presence of glutamine and ATP through an activated gamma-phospho-Glu-tRNA(Gln). This Marinomonas sp. (strain MWYL1) protein is Glutamyl-tRNA(Gln) amidotransferase subunit A.